The following is a 59-amino-acid chain: Small ribosomal subunit protein bS21 (59 aa).

Basic and acidic residues predominate over residues 32–42; sequence VRKREHYDKPS. The disordered stretch occupies residues 32-59; that stretch reads VRKREHYDKPSVKRKKKAEAARRKNAKK. Residues 43–59 show a composition bias toward basic residues; sequence VKRKKKAEAARRKNAKK.

It belongs to the bacterial ribosomal protein bS21 family.

In Clostridioides difficile (strain 630) (Peptoclostridium difficile), this protein is Small ribosomal subunit protein bS21.